The primary structure comprises 146 residues: Hemoglobin subunit beta (146 aa).

An N-acetylvaline modification is found at Val-1. The Globin domain occupies 2–146; that stretch reads HLSADEKNAL…VANALAHKYH (145 aa). Ser-44 carries the phosphoserine modification. Lys-59 is modified (N6-acetyllysine). His-63 contributes to the heme b binding site. Lys-82 is subject to N6-acetyllysine. His-92 is a binding site for heme b. Cys-93 carries the S-nitrosocysteine modification. Lys-144 is modified (N6-acetyllysine).

This sequence belongs to the globin family. In terms of assembly, heterotetramer of two alpha chains and two beta chains. In terms of tissue distribution, red blood cells.

Functionally, involved in oxygen transport from the lung to the various peripheral tissues. The sequence is that of Hemoglobin subunit beta from Sciurus carolinensis (Eastern gray squirrel).